The following is a 234-amino-acid chain: Aspartate/glutamate leucyltransferase (234 aa).

This sequence belongs to the R-transferase family. Bpt subfamily.

Its subcellular location is the cytoplasm. It carries out the reaction N-terminal L-glutamyl-[protein] + L-leucyl-tRNA(Leu) = N-terminal L-leucyl-L-glutamyl-[protein] + tRNA(Leu) + H(+). It catalyses the reaction N-terminal L-aspartyl-[protein] + L-leucyl-tRNA(Leu) = N-terminal L-leucyl-L-aspartyl-[protein] + tRNA(Leu) + H(+). Its function is as follows. Functions in the N-end rule pathway of protein degradation where it conjugates Leu from its aminoacyl-tRNA to the N-termini of proteins containing an N-terminal aspartate or glutamate. The protein is Aspartate/glutamate leucyltransferase of Hahella chejuensis (strain KCTC 2396).